A 527-amino-acid chain; its full sequence is Tyrosine-protein kinase TXK (527 aa).

The disordered stretch occupies residues 35-79; it reads DEELPEKYTQRRRPWLSQLSNKKQSNTGRVQPSKRKPLPPLPPSE. A compositionally biased stretch (polar residues) spans 51–64; sequence SQLSNKKQSNTGRV. A Nuclear localization signal motif is present at residues 68-73; the sequence is KRKPLP. One can recognise an SH3 domain in the interval 82–142; it reads EEKIQVKALY…PSNYVTENKI (61 aa). Residue Tyr91 is modified to Phosphotyrosine; by autocatalysis. Positions 150–246 constitute an SH2 domain; that stretch reads WYHRNITRNQ…GLMTRLRYPV (97 aa). The Protein kinase domain maps to 271–527; that stretch reads LAFIKEIGSG…RAVTEIAETW (257 aa). ATP is bound by residues 277-285 and Lys299; that span reads IGSGQFGVV. Asp390 serves as the catalytic Proton acceptor. Phosphotyrosine; by FYN and autocatalysis is present on Tyr420.

Belongs to the protein kinase superfamily. Tyr protein kinase family. TEC subfamily. As to quaternary structure, interacts with PARP1 and EEF1A1. Interacts with SH2D2A. Interacts with FYN. In terms of processing, phosphorylated at Tyr-420 by FYN. Autophosphorylation at Tyr-91 is critical for the activation of TXK, leading to the up-regulation of IFN-gamma gene transcription. The cysteine string at the N-terminus is palmitoylated and required for the proper subcellular location. In terms of tissue distribution, expressed in T-cells and some myeloid cell lines. Expressed in Th1/Th0 cells with IFN-gamma-producing potential.

It is found in the cytoplasm. The protein resides in the nucleus. Its subcellular location is the cell membrane. It catalyses the reaction L-tyrosyl-[protein] + ATP = O-phospho-L-tyrosyl-[protein] + ADP + H(+). With respect to regulation, activated by phosphorylation by FYN. In terms of biological role, non-receptor tyrosine kinase that plays a redundant role with ITK in regulation of the adaptive immune response. Regulates the development, function and differentiation of conventional T-cells and nonconventional NKT-cells. When antigen presenting cells (APC) activate T-cell receptor (TCR), a series of phosphorylation leads to the recruitment of TXK to the cell membrane, where it is phosphorylated at Tyr-420. Phosphorylation leads to TXK full activation. Also contributes to signaling from many receptors and participates in multiple downstream pathways, including regulation of the actin cytoskeleton. Like ITK, can phosphorylate PLCG1, leading to its localization in lipid rafts and activation, followed by subsequent cleavage of its substrates. In turn, the endoplasmic reticulum releases calcium in the cytoplasm and the nuclear activator of activated T-cells (NFAT) translocates into the nucleus to perform its transcriptional duty. Plays a role in the positive regulation of IFNG transcription in T-helper 1 cells as part of an IFNG promoter-binding complex with PARP1 and EEF1A1. Within the complex, phosphorylates both PARP1 and EEF1A1. Also phosphorylates key sites in LCP2 leading to the up-regulation of Th1 preferred cytokine IL-2. Phosphorylates 'Tyr-201' of CTLA4 which leads to the association of PI-3 kinase with the CTLA4 receptor. In Homo sapiens (Human), this protein is Tyrosine-protein kinase TXK (TXK).